A 273-amino-acid chain; its full sequence is Putative phosphoenolpyruvate synthase regulatory protein (273 aa).

153 to 160 (AVSRAGKT) is an ADP binding site.

This sequence belongs to the pyruvate, phosphate/water dikinase regulatory protein family. PSRP subfamily.

The enzyme catalyses [pyruvate, water dikinase] + ADP = [pyruvate, water dikinase]-phosphate + AMP + H(+). The catalysed reaction is [pyruvate, water dikinase]-phosphate + phosphate + H(+) = [pyruvate, water dikinase] + diphosphate. Bifunctional serine/threonine kinase and phosphorylase involved in the regulation of the phosphoenolpyruvate synthase (PEPS) by catalyzing its phosphorylation/dephosphorylation. The protein is Putative phosphoenolpyruvate synthase regulatory protein of Xanthomonas oryzae pv. oryzae (strain MAFF 311018).